Consider the following 508-residue polypeptide: RanBP-type and C3HC4-type zinc finger-containing protein 1 (508 aa).

The residue at position 1 (methionine 1) is an N-acetylmethionine. The tract at residues methionine 1–arginine 218 is interaction with IRF3. Positions methionine 1 to glutamine 268 are interaction with TAB2. A Phosphoserine modification is found at serine 50. The region spanning isoleucine 55–isoleucine 119 is the Ubiquitin-like domain. The segment at valine 69 to leucine 131 is interaction with RNF31. Residues glutamine 163–proline 191 form a disordered region. A RanBP2-type zinc finger spans residues proline 188–glutamate 220. Positions aspartate 231–asparagine 259 form a coiled coil. Positions glutamate 276–cysteine 504 are TRIAD supradomain. Cysteine 280, cysteine 283, cysteine 298, histidine 300, cysteine 303, cysteine 306, and cysteine 321 together coordinate Zn(2+). The segment at cysteine 280–cysteine 330 adopts an RING-type 1 zinc-finger fold. Phosphotyrosine is present on tyrosine 328. The Zn(2+) site is built by cysteine 330, cysteine 369, cysteine 374, cysteine 389, cysteine 392, cysteine 397, cysteine 400, histidine 404, cysteine 409, cysteine 445, and cysteine 448. The segment at glutamine 349–cysteine 409 adopts an IBR-type zinc-finger fold. The segment at cysteine 445 to threonine 474 adopts an RING-type 2; atypical zinc-finger fold. Cysteine 458 is a catalytic residue. 2 residues coordinate Zn(2+): cysteine 463 and cysteine 466.

Belongs to the RBR family. In terms of assembly, component of the LUBAC complex (linear ubiquitin chain assembly complex) which consists of SHARPIN, RBCK1 and RNF31. LUBAC has a MW of approximately 600 kDa suggesting a heteromultimeric assembly of its subunits. Interacts with beta-I-type (PRKCB1) and zeta-type protein kinase C (PRKCZ). Interacts with UBE2L3. Interacts with IREB2 only in iron-rich conditions. Associates with the TNF-R1 signaling complex (TNF-RSC) in a stimulation-dependent manner. Interacts with EYA1, TAB2, TAB3, MAP3K7 TRAF6 and RIPK1. Interacts with IRF3. Auto-ubiquitinated. Auto-ubiquitination leads to degradation by the proteasome. In terms of processing, phosphorylated. In vitro, phosphorylation inhibits auto-ubiquitination activity.

The enzyme catalyses [E2 ubiquitin-conjugating enzyme]-S-ubiquitinyl-L-cysteine + [acceptor protein]-L-lysine = [E2 ubiquitin-conjugating enzyme]-L-cysteine + [acceptor protein]-N(6)-ubiquitinyl-L-lysine.. It functions in the pathway protein modification; protein ubiquitination. In terms of biological role, E3 ubiquitin-protein ligase, which accepts ubiquitin from specific E2 ubiquitin-conjugating enzymes, such as UBE2L3/UBCM4, and then transfers it to substrates. Functions as an E3 ligase for oxidized IREB2 and both heme and oxygen are necessary for IREB2 ubiquitination. Promotes ubiquitination of TAB2 and IRF3 and their degradation by the proteasome. Component of the LUBAC complex which conjugates linear ('Met-1'-linked) polyubiquitin chains to substrates and plays a key role in NF-kappa-B activation and regulation of inflammation. LUBAC conjugates linear polyubiquitin to IKBKG and RIPK1 and is involved in activation of the canonical NF-kappa-B and the JNK signaling pathways. Linear ubiquitination mediated by the LUBAC complex interferes with TNF-induced cell death and thereby prevents inflammation. LUBAC is recruited to the TNF-R1 signaling complex (TNF-RSC) following polyubiquitination of TNF-RSC components by BIRC2 and/or BIRC3 and to conjugate linear polyubiquitin to IKBKG and possibly other components contributing to the stability of the complex. The LUBAC complex is also involved in innate immunity by conjugating linear polyubiquitin chains at the surface of bacteria invading the cytosol to form the ubiquitin coat surrounding bacteria. LUBAC is not able to initiate formation of the bacterial ubiquitin coat, and can only promote formation of linear polyubiquitins on pre-existing ubiquitin. The bacterial ubiquitin coat acts as an 'eat-me' signal for xenophagy and promotes NF-kappa-B activation. Together with OTULIN, the LUBAC complex regulates the canonical Wnt signaling during angiogenesis. Binds polyubiquitin of different linkage types. In Mus musculus (Mouse), this protein is RanBP-type and C3HC4-type zinc finger-containing protein 1 (Rbck1).